The sequence spans 109 residues: MSAQPVDIQIFGRSLRVNCPPDQRDALNQAADDLNQRLQDLKERTRVTNTEQLVFIAALNISYELAQEKAKTRDYAASMEQRIRMLQQTIEQALLEQGRITEKTNQNFE.

The stretch at 21 to 99 (PDQRDALNQA…IEQALLEQGR (79 aa)) forms a coiled coil.

It belongs to the ZapA family. Type 1 subfamily. Homodimer. Interacts with FtsZ.

Its subcellular location is the cytoplasm. Activator of cell division through the inhibition of FtsZ GTPase activity, therefore promoting FtsZ assembly into bundles of protofilaments necessary for the formation of the division Z ring. It is recruited early at mid-cell but it is not essential for cell division. In Shigella boydii serotype 18 (strain CDC 3083-94 / BS512), this protein is Cell division protein ZapA.